The following is a 529-amino-acid chain: Beta-hexosaminidase subunit alpha (529 aa).

Positions 1 to 22 (MASSRLWFSLLLAAALAGRATA) are cleaved as a signal peptide. The propeptide occupies 23–88 (LWPWPQNIQT…PRPYLTGKRH (66 aa)). Cysteines 58 and 104 form a disulfide. Residues Asn115, Asn157, and Asn295 are each glycosylated (N-linked (GlcNAc...) asparagine). The cysteines at positions 277 and 328 are disulfide-linked. Catalysis depends on Glu323, which acts as the Proton donor. A critical for hydrolysis GM2 gangliosides region spans residues 423 to 424 (NR). A disulfide bridge links Cys505 with Cys522.

Belongs to the glycosyl hydrolase 20 family. As to quaternary structure, there are 3 beta-hexosaminidase isozymes: isozyme A (hexosaminidase A) is a heterodimer composed of one subunit alpha and one subunit beta (chain A and B); isozyme B (hexosaminidase B) is a homodimer of two beta subunits (two chains A and B); isozyme S (hexosaminidase S) is a homodimer of two alpha subunits. The composition of the dimer (isozyme A versus isozyme S) has a significant effect on the substrate specificity of the alpha subunit active site.

The protein resides in the lysosome. The enzyme catalyses Hydrolysis of terminal non-reducing N-acetyl-D-hexosamine residues in N-acetyl-beta-D-hexosaminides.. It carries out the reaction N-acetyl-beta-D-galactosaminyl-(1-&gt;4)-beta-D-3-sulfogalactosyl-(1-&gt;4)-beta-D-glucosyl-(1&lt;-&gt;1')-ceramide + H2O = a beta-D-3-sulfogalactosyl-(1-&gt;4)-beta-D-glucosyl-(1&lt;-&gt;1')-ceramide + N-acetyl-beta-D-galactosamine. The catalysed reaction is a ganglioside GM2 (d18:1(4E)) + H2O = a ganglioside GM3 (d18:1(4E)) + N-acetyl-beta-D-galactosamine. It catalyses the reaction a ganglioside GM2 + H2O = a ganglioside GM3 + N-acetyl-beta-D-galactosamine. The enzyme catalyses beta-D-GalNAc-(1-&gt;4)-alpha-L-IdoA-(1-&gt;3)-beta-D-GalNAc-4-sulfate-(1-&gt;4)-alpha-L-IdoA-(1-&gt;3)-D-GalNAc-4-sulfate + H2O = alpha-L-IdoA-(1-&gt;3)-beta-D-GalNAc-4-sulfate-(1-&gt;4)-alpha-L-IdoA-(1-&gt;3)-D-GalNAc-4-sulfate + N-acetyl-D-galactosamine. It carries out the reaction N-acetyl-beta-D-6-sulfogalactosaminyl-(1-&gt;4)-alpha-L-iduronyl-(1-&gt;3)-N-acetyl-D-6-sulfogalactosamine + H2O = alpha-L-iduronyl-(1-&gt;3)-N-acetyl-D-6-sulfogalactosamine + N-acetyl-D-6-sulfogalactosamine. Addition of GM2A stimulates the hydrolysis of sulfated glycosphingolipid SM2 and the ganglioside GM2. Functionally, hydrolyzes the non-reducing end N-acetyl-D-hexosamine and/or sulfated N-acetyl-D-hexosamine of glycoconjugates, such as the oligosaccharide moieties from proteins and neutral glycolipids, or from certain mucopolysaccharides. The isozyme S is as active as the isozyme A on the anionic bis-sulfated glycans, the chondroitin-6-sulfate trisaccharide (C6S-3), and the dermatan sulfate pentasaccharide, and the sulfated glycosphingolipid SM2. The isozyme B does not hydrolyze each of these substrates, however hydrolyzes efficiently neutral oligosaccharide. Only the isozyme A is responsible for the degradation of GM2 gangliosides in the presence of GM2A. In Pongo abelii (Sumatran orangutan), this protein is Beta-hexosaminidase subunit alpha.